Reading from the N-terminus, the 5054-residue chain is MSRFSCIFPTLTDGYVPNLDQTRAAGRRTYTIDRRGWTAPSSQTESHILAAWGLVLSSYVGTDEVAFYIVPTTGPDTTALAELKVEGDMSRRSLINAAEQLLHPGPVGAGQVSGESANTIITFEKDIESLFVTQAEAANVGTAMAQALAEVGADDHNRLIKNLNLMSPTHLESIWQFNANVPGMWEECFHDVIERRAANRPHSLAVDAWDMKLTYADLVREARLLAAYLQHRGVRPGSVVPISFERSGAALVAMLAVSKAGGAFVSVPPTLPAGRLDAILEVIEAPFVVTWSKYEPFWAERLPTLPIDSYPKPSADATVKTLGKPEDLFYVIFTSGSTGRPKGCMLSHSNWLNGALRNAPSWKYGPESRVLQMLSHTFDMSLLEICTSLGSGACVCVPRTEEIETSVSDAINRWQVNHVIMTPSLARSLRRDDVPGLKTMCLGGEAFPREIVTMWSERINLWQFYGPSECSINSSSRPITRPDADPLNIGPPNSAACWVVDTQDYNKLVPVGAIGELLVSGPIVGMGYLKNPIKTAEAFLDEVGFVAKDDPQFGGFRFYRTGDLVRWNSDGTITFCGRADTQVKLNGQRLELAEVEYQLGLEAGVQYAIAMAPQSGRCKNNLIAVLTVKCGGASNQGNADDEIPLLDRHDPIVQQTVKKLRSQLQHALPRYMVPTIWAFVGRMPMSPSGKIDRVQLRNWVQEMSQETFDAITGRSFEAEDHVLGLSQLEQEIQLAWAEALGLSAAEVGLQQPFVALGGDSIKALDAVARCRARQIKISMVHILSCEGVREASSLAEVQETPAHQVAEIAVDYSDLWTRLSTEYDISKLGVTQVEEVEDVFPCTTMQEGMFLGQIRRPGAYHMRFFHRVQLKGGSLPTVERIQQAWASLVERHPSLRTVFVDDLSSEAIYHSVVLRSVPMELTMREVPRDLNPESALAMFTEELVPFRPNAPLHRMLLLTCRGRVPYLMLEISHVIMDGYALSVFRREFIRACSSTASLPRGPDYRMFANYHRTRQTDESAKYWTNYLADCVPCHIPTDPLSVPTDASPEWPRTLQRRDFGFDNSVAFLQRCKERQVTLACAIRAAWALVLRAYTQSRDVCFGYVSSGRNVPVPEVETIFGLCLSMQVCRAKLSEASTIASLARKIQEDYVASLPFQHYPLAEAQRGLKQTHGQGLFNTAISMEWVPPTAEDEDALLDLEEIREQDDPTEYDIAISVDIHEGHIKLGFLYWPNLSDFQITHLAEALQGAMNCFAFQPDVALNTLTLLQASDLCSTLTNGPTLLPLEAVRGNVISMIDRWVTRQPESPAIDGWDGSLTYKQLHEQSSWVARNLLHQGVKLGDRILVCADRSSRTVVTILGVVRAGCVLVLSNPTDPEKRLQWLAHKCNATLVVADPAYEERFATSGARVFSTTSVCAPAAWDYEFSALDDQDLVSILFTSGSTGTPKGILMDHGALATSVLLGHGRTLRFSRHTRMLHFASLTFDAALAEIFTTLAHGGCICVPCEEDRLSDVSGCISRFAVNTAMLTPSVGRLLDPEALPTLKALAMIGEPMSRLDVERFAPVLDLYNGAGPTETSIMVTIAGPMKPTDEPVNLGYAVAGVRLWVTEAENPNRLAPLGAVGELIVEGRLVTRGYLDDPARTRESFLPNLPWLPSQHALYRTGDLVRYAEDGSLRYMGRKDTQVKLRGQRIELQEVEYHLRKSLQQAQVVVEMVIPEGKIRAQASLVAFVSGLTAADVESSSARNFDQSMPMSQIALPGSTIQALEEALPRYMIPSVYFALDTIPLSVNGKADRRRLREIGAALLVSSTAHKNTVDGKSEPVKWTASSKLELTLLELWTTTLGLEAETIYGDDSFFELGGDSVSAMKLVATARDRFKLSLSVPQMFRHPTIHQLAAILGEATGQPESSASSTTEEGFTFSTPDDSSTNDGVDDDFLRLATAQLAQLAQEKGKKVDIAALLKQLQGGSSSCKTPSVSSSSSSSSSRKKKSAKVVSPVEAPAPVPVPFSLLDGGADVVEKIRAQAVEQCKILPGDIEDIYPATALQEGMMALMARTPGVYTTTLTCELPERVNLARLHSAWDKAAEAHPILRTRIILTENNTAVQVVQRAKELPWDAYSLQDGDPLPDLTSNMTLGSTLLRLAEIHRQNQPRMLLVAIHHALYDGWSMPLLKQAVEDVYHGQELWPQPFTPFINYLNEGKPAAQGYWTAHLDGFAGSVFPNLPSINHHIQPTERRTRSLAVPTAPPGSQYTMATKIQAAWAVTVSRYAEAEDIVFGTVSTGRSAPVPSIDRMVGPTITTVPVRISLGNQAERLTSLLQRVQEDGWNRMDHEHLGLQHIRRLGESAAAACNLQTLLVIQPREEPRAKSISTLLSGLQDVAELKGVDTYPLMLVCEPDGVSLHLTAVFDPAVLDAVMLDRMLAHWELVLNQIWSEPDMAVMGLDGVSYRDKQTLVRWNAGEKIADGCAHDAVYEWSVRTPHAPAVFAWDGKWTYEELEKCSSLIASQVLVHGVSSGDFVALYHEKSRWAAAAILAVFKAGGILVTLDPAHPKDRIKDILDQARPRLVLTSQSLLDEARELETPVMVVQFAASQPMPGECFPLPTVSPTQAAYAPFTSGSTGRPKGIPLEHRGLAASTASVARACLLRPASRVLHFASFAFDASMMEHLIAWHAGSCLCIPVETVRQTDLARCIRDFEVTWAFLTPSCLRLISPDDVQSLEALGLGGESMTPEDIFIWGPRLRQIVQLYGPAECSIVAALTEVTKPSENRLIGRPNACRCWVVDPHSPDRLAPLGAVGELVIEGITVGRGYIDDPERTTQAFIPPPTWIQTLYPNEQQPSRLYRTGDLVRYAGTDGKLTFIGRRDGQLKLHGQRIELADVEAHLRPLIPGTQKVVVEMVHSVGNHHPLLAAFVEEILTSQDQVEQVVNLLHPSQTQCALNVKAIDSALSQTVPQYMIPSMYLHISRLPLSASGKLNRRHLRRLVAEFPRQRLSEYAAGSGLAVPNRPATAQEREMQAIWARVLSVDPDTIGVNEDFFRIGGDSISGMQVATRCNAAGMHITSADLFQHRTIEQLMRHLSANGKTGSASISLPPEPVDEWVPLAPIQQLFFEIAPQGPDHFNQSLLLRTSRRVSAEKLAGGLDILVGRHSMLRARFCRDDSGQWSQQVRSRGPYPASAFYRLTTHNHIAPELLSSLLAASQMALSIQEGPLLAVDLVNLTDDTQLVYLVAHHLIIDLVSWRILHAELEEYLQTGSFASTTGSVPFLTWSRAQAEYSANHLTPTLPLPGFQEANDGFDASRYWGISCESNTFGQTSTSTFTLDQTVTDQLFGPANNVLDTRPAEILQAALWYSFTQSLTDRPGPSIYVEGHGREPWTGSIDLSGTVGWFTTMSPLVSAPWDSLSQTSMRDFLDALSYIKDQRRRIPANGWAYFTSRYLNDEGKVAYGRMKPVVEILFNYMGQYQEMNREDAILQLAGDGIQSGTGAADVADNVPRFSLIDVSAFISNGCLTFQFILPKSLQQDSRLQGCFQEYERTLVAAANSLSTEGPRKTLADFPLMPALTYDQLSQCLDHTLPSMGLCARDVVDIYPCSPVQQGMLLAQLRDRQAYQQRFRFQVKSRGSTDRLTLEKLKDAWTEVINRHDILRTLLLPVSDYSHLDQVVMAPGSLQHLVRINAMDTNPTQGLPHSINITSDSTGTVICEWNVSHALVDAMSIAVIQQEVNEALEGSLGQHQKTPRYADYIQWLSLQDNTETQAYWKKYLEGVEPCLFPKLASSTDKVNPEGTISAIRATWTRDSRLDKLCHTHGITLTNLFHIVWSLLLSAYLGTDKVCFGYTTLGRDVPVDGVEKMVGPLVNVIATTIQLQEDDSILDALLTHQTHLSNSLQHQHYALADVYASLGLVGSQLFNTIVSLQDISHFDANDERPTRVEMLPANDVSEYDVALNIGVDQSSIQVVCSYRTLSLSVEQADALLRTTSHVLDEILRDPKQPLRDLEVISPQCKEQLVKWNAAMPAPTDEYIHEKIQDQCRLHSSREAACAWDGIFTFAEVDDLSSRLAARLIRMGVTSGHIIPIYSPKSRWTVIAILGVLKTGAAFTLLETSHPTARLRVICNEIKADIIIAPASHAVPAATLAPILVVLDSITSMSPQESDLLPAVGMPPAAEALAYLIFTSGSTGNPKGVMVTHQNLCSNASIMTTSVNMTSDSRVLHFASHAFDACLWEIFGALFAGACLIIPSESETKEDLAGCIERMVVTWAFLTPSVARILKPEALPSLRNLVLGGEPIAASDLDMWRGHVQVVCAYGPTETAILASTTSPSTFPSDGKDIGVPTGSSLWIVDKQNYNKLAPHGATGELLIEGPNVSQGYLGDPEKTNEAFPVAPRWLSQLRKSPTRVYRTGDLVRFNTSTGTIHFVGRKDNQIKFHGQRIELGDIEHHAQQAFSNASMVIVDLITPEQPQQPYIVAFVHQADTRTGTADPIDTILLPPSESFRADAIGAQNHMHKRLPHYMVPTAFLPLHRLPLSGTGKADRKRLRQCALSLSSLELNAYRATASAKRMPFTAAECKMQELVATVLGRDMSEIGMDDSFFYLGGDSIQAMRLVSEGRQQGLTLSLQAIFDAPRLGDLAYRTANLVRVSEPAPPTLPATSSDDCDHKETIVAALPIKKTDVAEVLPTTSFQRTWLDSQLKSYIVVDIPGPIDLARLRTAIQRVVKAHPILRASFVPYETTTMQVILRTAVVITKADLSTTTVEGICRKDANAPMAPGTPYLRVILATQGEVDRKLIMRLSHAQYDGISLSLLMNDLSHAYASESRPLPSSHLPAFNDYITYQQTQGADPTATTFWHRLLKDVPITYLDLQPAETPTSNGSLITRTRDINIAAFPSLPNGITTATAVKAAWSLVLAQKTGSLAVIFGQVVHGRGIALTGVEGIVGPCANITPVVARLGPQTTRMELMQTLQDQHRSAMPYETAGRKELQTIVQHQNNVMADDMELSLGEARCRVDLRAVDHVPQEVWVYSSIDGGRPGMLEVKIMSSTLVLSEEVAEELMDLLVEMMKRLFSDPEGVCV.

An adenylation 1 region spans residues E194–L585. The 77-residue stretch at L723–E799 folds into the Carrier 1 domain. At S760 the chain carries O-(pantetheine 4'-phosphoryl)serine. The condensation 1 stretch occupies residues E837–A1268. The tract at residues D1296 to R1685 is adenylation 2. The Carrier 2 domain occupies T1823–T1900. Residue S1860 is modified to O-(pantetheine 4'-phosphoryl)serine. Disordered stretches follow at residues A1899–V1929 and G1964–V1994. Low complexity-rich tracts occupy residues E1904–D1927 and S1965–S1981. Residues E2033–L2448 form a condensation 2 region. The tract at residues V2471 to L2863 is adenylation 3. A Carrier 3 domain is found at R2999–G3075. O-(pantetheine 4'-phosphoryl)serine is present on S3036. 2 condensation regions span residues W3092–Q3557 and D3578–V3997. Residues H4022–F4412 are adenylation 4. The region spanning M4546–V4622 is the Carrier 4 domain. Residue S4583 is modified to O-(pantetheine 4'-phosphoryl)serine. The tract at residues E4659–N4972 is condensation 5.

Belongs to the NRP synthetase family.

The protein operates within secondary metabolite biosynthesis. Functionally, nonribosomal peptide synthetase; part of the gene cluster that mediates the biosynthesis of malformins, cyclic pentapeptides with a disulfide bond between 2 consecutive cysteins, that show potential anti-tumor as well as antimalarial and antitrypanosomal properties. The nonribosomal peptide synthetase mlfA is responsible of the formation of the cyclic pentapeptide. The malformin biosynthesis clusters in malformin-producing fungi also contain enzymes involved in the formation of the disulfide bond between the two consecutive cysteins within malformins, in addition to additional tailoring enzymes such as methyltransferases or oxidoreductases. They are also composed of up to 4 major facilitator superfamily transporters, and transcription factors probably involved in the regulation of the expression of those clusters. The chain is Malformin synthetase mlfA from Aspergillus niger (strain ATCC MYA-4892 / CBS 513.88 / FGSC A1513).